The chain runs to 121 residues: Large ribosomal subunit protein bL12 (121 aa).

It belongs to the bacterial ribosomal protein bL12 family. In terms of assembly, homodimer. Part of the ribosomal stalk of the 50S ribosomal subunit. Forms a multimeric L10(L12)X complex, where L10 forms an elongated spine to which 2 to 4 L12 dimers bind in a sequential fashion. Binds GTP-bound translation factors.

Forms part of the ribosomal stalk which helps the ribosome interact with GTP-bound translation factors. Is thus essential for accurate translation. The sequence is that of Large ribosomal subunit protein bL12 from Malacoplasma penetrans (strain HF-2) (Mycoplasma penetrans).